The chain runs to 347 residues: MKQTIILLYGGRSAEREVSVLSAESVMRAVNYDRFTVKTFFISQSGDFIKTQEFSHAPGQEDRLMTNETIDWDKKVAPSAIYEEGAVVFPVLHGPMGEDGSVQGFLEVLKMPYVGCNILSSSLAMDKITTKRVLESAGIAQVPYVAIVEGDDVTAKIAEVEEKLAYPVFTKPSNMGSSVGISKSENQEELRPALELAFRYDSRVLVEQGVNAREIEVGLLGNYDVKSTLPGEVVKDVAFYDYDAKYIDNKITMDIPAKISDDVVAVMRQNAETAFRAIGGLGLSRCDFFYTDKGEIFLNELNTMPGFTQWSMYPLLWDNMGISYPELIERLVDLAKESFDKREAHLI.

One can recognise an ATP-grasp domain in the interval K131–D333. An ATP-binding site is contributed by E161–E216. Residues D287, E300, and N302 each coordinate Mg(2+).

The protein belongs to the D-alanine--D-alanine ligase family. Mg(2+) serves as cofactor. It depends on Mn(2+) as a cofactor.

The protein localises to the cytoplasm. It carries out the reaction 2 D-alanine + ATP = D-alanyl-D-alanine + ADP + phosphate + H(+). The protein operates within cell wall biogenesis; peptidoglycan biosynthesis. Cell wall formation. This Streptococcus pneumoniae (strain Taiwan19F-14) protein is D-alanine--D-alanine ligase.